We begin with the raw amino-acid sequence, 452 residues long: UPF0210 protein Daud_1353 (452 aa).

It belongs to the UPF0210 family. As to quaternary structure, homodimer.

This is UPF0210 protein Daud_1353 from Desulforudis audaxviator (strain MP104C).